The following is a 68-amino-acid chain: Large ribosomal subunit protein bL32 (68 aa).

The protein belongs to the bacterial ribosomal protein bL32 family.

The polypeptide is Large ribosomal subunit protein bL32 (Orientia tsutsugamushi (strain Ikeda) (Rickettsia tsutsugamushi)).